The primary structure comprises 209 residues: Large ribosomal subunit protein uL4 (209 aa).

The segment at 46–72 (GTSSTKTRSEVRGSSKKPWKQKGTGRA) is disordered. Over residues 59-72 (SSKKPWKQKGTGRA) the composition is skewed to basic residues.

It belongs to the universal ribosomal protein uL4 family. Part of the 50S ribosomal subunit.

Its function is as follows. One of the primary rRNA binding proteins, this protein initially binds near the 5'-end of the 23S rRNA. It is important during the early stages of 50S assembly. It makes multiple contacts with different domains of the 23S rRNA in the assembled 50S subunit and ribosome. Functionally, forms part of the polypeptide exit tunnel. This Borreliella burgdorferi (strain ATCC 35210 / DSM 4680 / CIP 102532 / B31) (Borrelia burgdorferi) protein is Large ribosomal subunit protein uL4.